Consider the following 392-residue polypeptide: Phosphoglycerate kinase (392 aa).

Residues D21–N23, R36, H59–R62, R114, and R147 contribute to the substrate site. ATP contacts are provided by residues K198, E320, and G346 to T349.

Belongs to the phosphoglycerate kinase family. As to quaternary structure, monomer.

The protein localises to the cytoplasm. It carries out the reaction (2R)-3-phosphoglycerate + ATP = (2R)-3-phospho-glyceroyl phosphate + ADP. It functions in the pathway carbohydrate degradation; glycolysis; pyruvate from D-glyceraldehyde 3-phosphate: step 2/5. The protein is Phosphoglycerate kinase of Neisseria meningitidis serogroup A / serotype 4A (strain DSM 15465 / Z2491).